The primary structure comprises 2089 residues: Mediator of DNA damage checkpoint protein 1 (2089 aa).

Positions 1 to 19 (MEDTQAIDWDVEEEEETEQ) are enriched in acidic residues. The interval 1-22 (MEDTQAIDWDVEEEEETEQSSE) is disordered. The interval 1–150 (MEDTQAIDWD…SRGPLTVEET (150 aa)) is interaction with CHEK2. Positions 2 to 220 (EDTQAIDWDV…PFAFNLNSDT (219 aa)) are interaction with the MRN complex. Position 4 is a phosphothreonine; by ATM (T4). The FHA domain occupies 54 to 105 (NVVGRMPDCSVALPFPSISKQHAEIEILAWDKAPILRDCGSLNGTQILRPPK). S108 carries the post-translational modification Phosphoserine. Positions 145-568 (LTVEETPRVQ…PAKLLVVSLE (424 aa)) are required for nuclear localization (NLS1). The residue at position 146 (T146) is a Phosphothreonine. S168 carries the phosphoserine; by CK2 modification. At S176 the chain carries Phosphoserine. Disordered regions lie at residues 185 to 248 (RTTS…AKQS), 261 to 280 (DQPL…GAGN), and 286 to 317 (GVIL…AEVH). 2 positions are modified to phosphoserine; by CK2: S196 and S218. T220 carries the phosphothreonine; by CK2 modification. Residues 261–274 (DQPLVKERDNDTKV) are compositionally biased toward basic and acidic residues. Phosphoserine; by CK2 is present on S299. A Phosphothreonine; by CK2 modification is found at T301. Basic and acidic residues predominate over residues 306–317 (DSRPPGRPAEVH). S329 bears the Phosphoserine; by CK2 mark. Phosphothreonine; by CK2 is present on T331. Phosphoserine is present on S372. The residue at position 376 (S376) is a Phosphoserine; by CK2. Residue T378 is modified to Phosphothreonine; by CK2. Residues S394 and S397 each carry the phosphoserine modification. At S402 the chain carries Phosphoserine; by CK2. Residue T404 is modified to Phosphothreonine; by CK2. The residue at position 411 (S411) is a Phosphoserine. T449 bears the Phosphothreonine mark. Residue S453 is modified to Phosphoserine; by CK2. The residue at position 455 (T455) is a Phosphothreonine; by CK2. The segment at 482–515 (RAHSEKDQPPFGDSDDSVEADKSSPGIHLERSQA) is disordered. Phosphoserine is present on residues S485, S495, S498, S504, S505, and S513. The residue at position 523 (T523) is a Phosphothreonine. S590 bears the Phosphoserine mark. A Glycyl lysine isopeptide (Lys-Gly) (interchain with G-Cter in SUMO1); alternate cross-link involves residue K616. K616 is covalently cross-linked (Glycyl lysine isopeptide (Lys-Gly) (interchain with G-Cter in SUMO2); alternate). 2 disordered regions span residues 653-689 (DTLG…DNYG) and 780-1887 (SPPR…TKLN). The segment covering 671–685 (GREREQHVGGTKDSE) has biased composition (basic and acidic residues). A phosphoserine mark is found at S780 and S793. N6-acetyllysine is present on K812. Basic and acidic residues-rich tracts occupy residues 819–844 (ETAE…ERQT), 851–862 (ELTKGKQDREQK), 868–905 (DTQR…EKQV), and 914–951 (AFER…RGEP). A phosphoserine mark is found at S955 and S998. Residues 955–965 (SQDQKGQASSP) show a composition bias toward polar residues. Residues 1016–1031 (KASRIRAAEKVSRGDQ) show a composition bias toward basic and acidic residues. S1033 bears the Phosphoserine mark. Residues 1040 to 1051 (PTVPEAPAPPQK) are compositionally biased toward pro residues. Phosphoserine occurs at positions 1068 and 1086. Residues 1103–1113 (PKPKIRTRKSS) are compositionally biased toward basic residues. Polar residues predominate over residues 1129–1156 (PSTSTAQPVTPKPTSQATRSRTNRSSVK). The interaction with the PRKDC complex stretch occupies residues 1148 to 1610 (SRTNRSSVKT…TNRSSVKTPE (463 aa)). Phosphothreonine is present on T1157. Residues 1169–1187 (QPSTSTDQPVTSEPTSQVT) are compositionally biased toward polar residues. Phosphothreonine is present on T1198. Over residues 1210–1228 (QPSTSTDRPVTSEPTSQAT) the composition is skewed to polar residues. Residue S1235 is modified to Phosphoserine. A Phosphothreonine modification is found at T1239. The segment covering 1251–1268 (QPSTSTDQPVTSEPTYQA) has biased composition (polar residues). A phosphothreonine mark is found at T1280 and T1302. 2 stretches are compositionally biased toward low complexity: residues 1304-1318 (KPTS…NMSS) and 1347-1359 (TSRT…NMSS). Residues 1375 to 1391 (PSTSTEQPVTPEPTSRA) are compositionally biased toward polar residues. Residues S1399 and S1400 each carry the phosphoserine modification. K1402 is modified (N6-acetyllysine). A Phosphothreonine modification is found at T1403. K1413 is covalently cross-linked (Glycyl lysine isopeptide (Lys-Gly) (interchain with G-Cter in SUMO1); alternate). A Glycyl lysine isopeptide (Lys-Gly) (interchain with G-Cter in SUMO2); alternate cross-link involves residue K1413. Composition is skewed to polar residues over residues 1416–1444 (PSTS…SVKT), 1456–1475 (QPST…QATR), 1498–1514 (ASAS…TSRT), and 1538–1555 (QPST…TSRA). Phosphothreonine occurs at positions 1425 and 1466. T1548 carries the phosphothreonine modification. The residue at position 1564 (S1564) is a Phosphoserine. Residues T1567 and T1589 each carry the phosphothreonine modification. Residues 1579–1596 (QPSTSRNQLVTPEPTSRA) show a composition bias toward polar residues. At S1604 the chain carries Phosphoserine. At T1608 the chain carries Phosphothreonine. A compositionally biased stretch (pro residues) spans 1611–1620 (PVVPTAPEPH). Polar residues predominate over residues 1624 to 1636 (STDQPVTPKLTSR). Phosphothreonine occurs at positions 1630, 1664, and 1671. Positions 1678 to 1689 (GGQSKTLRSSTV) are enriched in polar residues. Phosphoserine is present on S1681. The residue at position 1697 (T1697) is a Phosphothreonine. The span at 1698 to 1719 (PEFQSPVTTDQPISPEPITQPS) shows a compositional bias: polar residues. The tract at residues 1698–2089 (PEFQSPVTTD…VLSPLEMSST (392 aa)) is required for nuclear localization (NLS2). Residues S1702 and S1711 each carry the phosphoserine modification. K1740 participates in a covalent cross-link: Glycyl lysine isopeptide (Lys-Gly) (interchain with G-Cter in SUMO2). S1775 bears the Phosphoserine mark. A Glycyl lysine isopeptide (Lys-Gly) (interchain with G-Cter in SUMO2) cross-link involves residue K1790. T1800 is subject to Phosphothreonine. Position 1820 is a phosphoserine (S1820). The segment covering 1823–1836 (HQKQPQRGEVSQKT) has biased composition (polar residues). Residue K1840 forms a Glycyl lysine isopeptide (Lys-Gly) (interchain with G-Cter in SUMO1); alternate linkage. A Glycyl lysine isopeptide (Lys-Gly) (interchain with G-Cter in SUMO2); alternate cross-link involves residue K1840. The segment covering 1847 to 1857 (AEKPGKEEDVV) has biased composition (basic and acidic residues). Residue T1858 is modified to Phosphothreonine. 2 BRCT domains span residues 1892-1970 (APKV…EYVV) and 1991-2082 (RERR…FVLS). R1943 is subject to Omega-N-methylarginine.

As to quaternary structure, homodimer. Interacts with H2AX, which requires phosphorylation of H2AX on 'Ser-139'. Interacts with the MRN complex, composed of MRE11, RAD50, and NBN. Interacts with CHEK2, which requires ATM-mediated phosphorylation of 'Thr-68' within the FHA domain of CHEK2. Interacts constitutively with the BRCA1-BARD1 complex, SMC1A and TP53BP1. Interacts with ATM and FANCD2, and these interactions are reduced upon DNA damage. Also interacts with the PRKDC complex, composed of XRCC6/KU70, XRCC5/KU80 and PRKDC/XRCC7. This interaction may be required for PRKDC autophosphorylation, which is essential for DNA double strand break (DSB) repair. When phosphorylated by ATM, interacts with RNF8 (via FHA domain). Interacts with CEP164. When phosphorylated, interacts with APTX (via FHA-like domain). Interacts (when phosphorylated) with TOPBP1; promoting TOPBP1 localization to DNA damage sites during mitosis. Interacts (when phosphorylated) with NBN; promoting NBN and MRN complex localization to DNA damage sites. In terms of processing, phosphorylated upon exposure to ionizing radiation (IR), ultraviolet radiation (UV), and hydroxyurea (HU). Phosphorylation in response to IR requires ATM, NBN, and possibly CHEK2. Also phosphorylated during the G2/M phase of the cell cycle and during activation of the mitotic spindle checkpoint. Phosphorylation at Thr-4 by ATM stabilizes and enhances homodimerization via the FHA domain. Phosphorylated at Ser-168 and Ser-196 by CK2 in response to DNA damage during mitosis, promoting interaction with TOPBP1. Phosphorylated by CK2 in response to DNA damage, promoting interaction with NBN and recruitment of the MRN complex to DNA damage sites. Post-translationally, sumoylation at Lys-1840 by PIAS4 following DNA damage promotes ubiquitin-mediated degradation. Ubiquitinated by RNF4, leading to proteasomal degradation; undergoes 'Lys-48'-linked polyubiquitination. In terms of tissue distribution, highly expressed in testis.

It is found in the nucleus. It localises to the chromosome. Histone reader protein required for checkpoint-mediated cell cycle arrest in response to DNA damage within both the S phase and G2/M phases of the cell cycle. Specifically recognizes and binds histone H2AX phosphorylated at 'Ser-139', a marker of DNA damage, serving as a scaffold for the recruitment of DNA repair and signal transduction proteins to discrete foci of DNA damage sites. Also required for downstream events subsequent to the recruitment of these proteins. These include phosphorylation and activation of the ATM, CHEK1 and CHEK2 kinases, and stabilization of TP53/p53 and apoptosis. ATM and CHEK2 may also be activated independently by a parallel pathway mediated by TP53BP1. Required for chromosomal stability during mitosis by promoting recruitment of TOPBP1 to DNA double strand breaks (DSBs): TOPBP1 forms filamentous assemblies that bridge MDC1 and tether broken chromosomes during mitosis. Required for the repair of DSBs via homologous recombination by promoting recruitment of NBN component of the MRN complex to DSBs. The protein is Mediator of DNA damage checkpoint protein 1 of Homo sapiens (Human).